The chain runs to 258 residues: HLA class II histocompatibility antigen, DP beta 1 chain (258 aa).

Positions 1–29 (MMVLQVSAAPRTVALTALLMVLLTSVVQG) are cleaved as a signal peptide. Residues 30–121 (RATPENYLFQ…LGGPMTLQRR (92 aa)) are beta-1. Residues 30–225 (RATPENYLFQ…KAQSDSARSK (196 aa)) lie on the Extracellular side of the membrane. Intrachain disulfides connect cysteine 44–cysteine 106 and cysteine 144–cysteine 200. Residue asparagine 48 is glycosylated (N-linked (GlcNAc...) asparagine). A beta-2 region spans residues 122-215 (VQPRVNVSPS…SLDSPVTVEW (94 aa)). In terms of domain architecture, Ig-like C1-type spans 124–212 (PRVNVSPSKK…EHTSLDSPVT (89 aa)). The tract at residues 216-225 (KAQSDSARSK) is connecting peptide. Residues 226-246 (TLTGAGGFVLGLIICGVGIFM) traverse the membrane as a helical segment. Over 247–258 (HRRSKKVQRGSA) the chain is Cytoplasmic.

Belongs to the MHC class II family. As to quaternary structure, heterodimer of an alpha and a beta subunit; also referred as MHC class II molecule. In the endoplasmic reticulum (ER) it forms a heterononamer; 3 MHC class II molecules bind to a CD74 homotrimer (also known as invariant chain or HLA class II histocompatibility antigen gamma chain). In the endosomal/lysosomal system; CD74 undergoes sequential degradation by various proteases; leaving a small fragment termed CLIP on each MHC class II molecule. MHC class II molecule interacts with HLA_DM, and HLA_DO in B-cells, in order to release CLIP and facilitate the binding of antigenic peptides.

Its subcellular location is the cell membrane. It is found in the endoplasmic reticulum membrane. It localises to the golgi apparatus. The protein localises to the trans-Golgi network membrane. The protein resides in the endosome membrane. Its subcellular location is the lysosome membrane. Functionally, binds peptides derived from antigens that access the endocytic route of antigen presenting cells (APC) and presents them on the cell surface for recognition by the CD4 T-cells. The peptide binding cleft accommodates peptides of 10-30 residues. The peptides presented by MHC class II molecules are generated mostly by degradation of proteins that access the endocytic route, where they are processed by lysosomal proteases and other hydrolases. Exogenous antigens that have been endocytosed by the APC are thus readily available for presentation via MHC II molecules, and for this reason this antigen presentation pathway is usually referred to as exogenous. As membrane proteins on their way to degradation in lysosomes as part of their normal turn-over are also contained in the endosomal/lysosomal compartments, exogenous antigens must compete with those derived from endogenous components. Autophagy is also a source of endogenous peptides, autophagosomes constitutively fuse with MHC class II loading compartments. In addition to APCs, other cells of the gastrointestinal tract, such as epithelial cells, express MHC class II molecules and CD74 and act as APCs, which is an unusual trait of the GI tract. To produce a MHC class II molecule that presents an antigen, three MHC class II molecules (heterodimers of an alpha and a beta chain) associate with a CD74 trimer in the ER to form a heterononamer. Soon after the entry of this complex into the endosomal/lysosomal system where antigen processing occurs, CD74 undergoes a sequential degradation by various proteases, including CTSS and CTSL, leaving a small fragment termed CLIP (class-II-associated invariant chain peptide). The removal of CLIP is facilitated by HLA-DM via direct binding to the alpha-beta-CLIP complex so that CLIP is released. HLA-DM stabilizes MHC class II molecules until primary high affinity antigenic peptides are bound. The MHC II molecule bound to a peptide is then transported to the cell membrane surface. In B-cells, the interaction between HLA-DM and MHC class II molecules is regulated by HLA-DO. Primary dendritic cells (DCs) also to express HLA-DO. Lysosomal microenvironment has been implicated in the regulation of antigen loading into MHC II molecules, increased acidification produces increased proteolysis and efficient peptide loading. The sequence is that of HLA class II histocompatibility antigen, DP beta 1 chain (HLA-DPB1) from Homo sapiens (Human).